Here is a 611-residue protein sequence, read N- to C-terminus: CRS2-associated factor 2, chloroplastic (611 aa).

The transit peptide at 1–58 (MPPPPPQRPASSHVGRANLFSASPPPLSNRRYPHHRSLPLPPVSPRRRDPKKHSQQPS) directs the protein to the chloroplast. Residues 1–72 (MPPPPPQRPA…TDSGPTRTVT (72 aa)) are disordered. The segment covering 55 to 72 (QQPSQEEPTDSGPTRTVT) has biased composition (polar residues). 2 CRM domains span residues 232–328 (EPLT…TRPR) and 350–446 (DGFT…YSKP). Residues 486 to 509 (KMFKLWKSAVDSSLALLLDDAEAN) are CRS2 binding. Positions 554–578 (MNDEPETSVAGNEEGQLEQSPDLRD) are disordered.

Interacts with CRS2 and RNA. Part of large ribonucleo-protein complexes that include group IIB introns, CRS2 and CAF2.

It is found in the plastid. Its subcellular location is the chloroplast stroma. Its function is as follows. Required for the splicing of group IIB introns in chloroplasts. Forms splicing particles with CRS2. Interacts with RNA and confers intron specificity of the splicing particles. This is CRS2-associated factor 2, chloroplastic (CAF2) from Zea mays (Maize).